Reading from the N-terminus, the 113-residue chain is U11-theraphotoxin-Hhn1a (113 aa).

The first 21 residues, 1–21 (MNTVRVTFLLVFVLAVSLGQA), serve as a signal peptide directing secretion. The propeptide occupies 22-74 (DKDENRMEMQGKTEQGKSYLDFAENLLLQKLEELEAKLLEEDSEESRNSRQKR). Disulfide bonds link Cys-75–Cys-90, Cys-82–Cys-95, and Cys-89–Cys-110.

It belongs to the neurotoxin 14 (magi-1) family. 01 (HNTX-16) subfamily. In terms of tissue distribution, expressed by the venom gland.

It is found in the secreted. Functionally, probable ion channel inhibitor. The chain is U11-theraphotoxin-Hhn1a from Cyriopagopus hainanus (Chinese bird spider).